Consider the following 473-residue polypeptide: MTRPVVTRFAPSPTGFLHIGGGRTALFNWLYARKHGGKMLLRIEDTDRQRSTQPAIDAILDGLKWLGIEWDGDTVYQFARAARHREVAEQLLAEGKAYRCYATAEELTAMRDKARAEGRSKLYDGSWRDRDPSDAPADLNPTIRLRAPLTGETVIEDQVQGRVVWQNENLDDLVLLRGDGTPTYMLAVVVDDHDMDVTHIIRGDDHLINAARQKQIYDAMGWELPVMAHIPLIHGPDGSKLSKRHGALGVDAYRAMGYLPAALRNYLVRLGWSHGDQELFTTQEMIDAFDLSAIGRSAARFDFAKLESLNGHYIRQTDDQSLVTLLEDLLHYVPQGPAIAARLTDTTRAQLLQAMPGLKERAKTLLELLDNAGFIFADRPLAVDTKGQTVLTPETRALIGRLRAALEDVSPWTAANTEAAMRTFAEQTGLKLGAVAQPLRVALTGRTTSPGIFDVLAVLGREECLSRLADQAA.

The 'HIGH' region motif lies at 11 to 21; sequence PSPTGFLHIGG. Positions 240-244 match the 'KMSKS' region motif; sequence KLSKR. Lysine 243 lines the ATP pocket.

This sequence belongs to the class-I aminoacyl-tRNA synthetase family. Glutamate--tRNA ligase type 1 subfamily. As to quaternary structure, monomer.

The protein resides in the cytoplasm. It carries out the reaction tRNA(Glu) + L-glutamate + ATP = L-glutamyl-tRNA(Glu) + AMP + diphosphate. Functionally, catalyzes the attachment of glutamate to tRNA(Glu) in a two-step reaction: glutamate is first activated by ATP to form Glu-AMP and then transferred to the acceptor end of tRNA(Glu). The polypeptide is Glutamate--tRNA ligase (Rhodopseudomonas palustris (strain BisB5)).